We begin with the raw amino-acid sequence, 1465 residues long: Neuropathy target esterase sws (1465 aa).

Residues 1–34 (MDVLEMLRASASGSYNTIFSEAWCQYVSKQITAT) lie on the Lumenal side of the membrane. The helical transmembrane segment at 35 to 55 (MYMYCALGMMGVLFLAWFMYF) threads the bilayer. Topologically, residues 56-1465 (KRMARLRLRD…RSSANNETKN (1410 aa)) are cytoplasmic. 174-301 (IFGHFEKPVF…IRVIQVIMIR (128 aa)) is an a nucleoside 3',5'-cyclic phosphate binding site. Polar residues-rich tracts occupy residues 331–349 (STMS…RQTP) and 434–454 (QQSV…TPDG). 2 disordered regions span residues 331 to 421 (STMS…TEVH) and 434 to 460 (QQSV…SCPP). Phosphoserine is present on residues Ser446 and Ser455. A nucleoside 3',5'-cyclic phosphate-binding positions include 484-611 (ELGL…VVRR) and 600-727 (IVLD…LSHR). Positions 954-1120 (LVLGGGGARG…VNNLPGHLWR (167 aa)) constitute a PNPLA domain. The short motif at 958-963 (GGGARG) is the GXGXXG element. Residues 985–989 (GVSIG) carry the GXSXG motif. The active-site Nucleophile is the Ser987. Residue Asp1107 is the Proton acceptor of the active site. A DGA/G motif is present at residues 1107–1109 (DGG). Residue Ser1201 is modified to Phosphoserine. The segment at 1371-1465 (LERKTDKSTQ…RSSANNETKN (95 aa)) is disordered. Low complexity predominate over residues 1378-1390 (STQSSPPTSSRTS). The span at 1392–1402 (RGKEEARHMDN) shows a compositional bias: basic and acidic residues. A compositionally biased stretch (polar residues) spans 1413–1424 (TGSGATEGIHTS). A compositionally biased stretch (basic and acidic residues) spans 1447 to 1456 (VYKDEDKENR).

Belongs to the NTE family. As to quaternary structure, interacts with Pka-C3; interaction inhibits the catalytic function of Pka-C3 and the esterase activity of sws.

The protein localises to the endoplasmic reticulum membrane. It carries out the reaction a 1-acyl-sn-glycero-3-phosphocholine + H2O = sn-glycerol 3-phosphocholine + a fatty acid + H(+). Functionally, phospholipase B that deacylates intracellular phosphatidylcholine (PtdCho), generating glycerophosphocholine (GroPtdCho). This deacylation occurs at both sn-2 and sn-1 positions of PtdCho. Its specific chemical modification by certain organophosphorus (OP) compounds leads to distal axonopathy. Plays a role in the signaling mechanism between neurons and glia that regulates glia wrapping during development of the adult brain. Essential for membrane lipid homeostasis and cell survival in both neurons and glia of the adult brain. The protein is Neuropathy target esterase sws of Drosophila erecta (Fruit fly).